A 142-amino-acid chain; its full sequence is Nucleoside diphosphate kinase (142 aa).

6 residues coordinate ATP: Lys-11, Phe-59, Arg-87, Thr-93, Arg-104, and Asn-114. Residue His-117 is the Pros-phosphohistidine intermediate of the active site.

This sequence belongs to the NDK family. Homotetramer. The cofactor is Mg(2+).

Its subcellular location is the cytoplasm. The catalysed reaction is a 2'-deoxyribonucleoside 5'-diphosphate + ATP = a 2'-deoxyribonucleoside 5'-triphosphate + ADP. The enzyme catalyses a ribonucleoside 5'-diphosphate + ATP = a ribonucleoside 5'-triphosphate + ADP. In terms of biological role, major role in the synthesis of nucleoside triphosphates other than ATP. The ATP gamma phosphate is transferred to the NDP beta phosphate via a ping-pong mechanism, using a phosphorylated active-site intermediate. The sequence is that of Nucleoside diphosphate kinase from Photobacterium profundum (strain SS9).